Consider the following 388-residue polypeptide: uncharacterized protein (388 aa).

It belongs to the glycosyltransferase 28 family.

This is an uncharacterized protein from Methanosarcina acetivorans (strain ATCC 35395 / DSM 2834 / JCM 12185 / C2A).